The primary structure comprises 133 residues: DNA-directed RNA polymerases I and III subunit RPAC2 (133 aa).

Residue M1 is modified to N-acetylmethionine. The disordered stretch occupies residues 1 to 22 (MEEDQELERKMSGVKTSMAEGE).

The protein belongs to the archaeal Rpo11/eukaryotic RPB11/RPC19 RNA polymerase subunit family. In terms of assembly, component of the RNA polymerase I and RNA polymerase III complexes consisting of at least 13 and 17 subunits, respectively. The transcriptionally active RNA polymerase III complex consists of a ten-subunit horseshoe-shaped catalytic core composed of POLR3A/RPC1, POLR3B/RPC2, POLR1C/RPAC1, POLR1D/RPAC2, POLR3K/RPC10, POLR2E/RPABC1, POLR2F/RPABC2, POLR2H/RPABC3, POLR2K/RPABC4 and POLR2L/RPABC5; a mobile stalk composed of two subunits POLR3H/RPC8 and CRCP/RPC9, protruding from the core and functioning primarily in transcription initiation; and additional subunits homologous to general transcription factors of the RNA polymerase II machinery, POLR3C/RPC3-POLR3F/RPC6-POLR3G/RPC7 heterotrimer required for transcription initiation and POLR3D/RPC4-POLR3E/RPC5 heterodimer involved in both transcription initiation and termination.

Its subcellular location is the nucleus. Functionally, DNA-dependent RNA polymerase catalyzes the transcription of DNA into RNA using the four ribonucleoside triphosphates as substrates. Common component of RNA polymerases I and III which synthesize ribosomal RNA precursor pre-rRNA and short non-coding RNAs including 5S rRNA, snRNAs, tRNAs and miRNAs, respectively. The sequence is that of DNA-directed RNA polymerases I and III subunit RPAC2 (POLR1D) from Bos taurus (Bovine).